Reading from the N-terminus, the 87-residue chain is HssA/B-like protein 55 (87 aa).

Residues 1–13 (MTILSAITSISRP) show a composition bias toward polar residues. Residues 1–31 (MTILSAITSISRPNKSSKSVVSSNGGSSLSM) form a disordered region. The span at 14-31 (NKSSKSVVSSNGGSSLSM) shows a compositional bias: low complexity.

Belongs to the hssA/B family.

The sequence is that of HssA/B-like protein 55 (hssl55) from Dictyostelium discoideum (Social amoeba).